A 658-amino-acid chain; its full sequence is UvrABC system protein B (658 aa).

The 390-residue stretch at 25 to 414 (KSLKNNNHYQ…LSKKNVAEQI (390 aa)) folds into the Helicase ATP-binding domain. 38 to 45 (GVTGSGKT) serves as a coordination point for ATP. A Beta-hairpin motif is present at residues 91 to 114 (HFDYYQPESYIPRRDLFIEKDSSI). A Helicase C-terminal domain is found at 433 to 607 (QVQDLFDEIK…ELKLRDDEIR (175 aa)). The 36-residue stretch at 623–658 (EKIIKELDKKMRECTKNLDFEEAMRLRDEIAQLRTL) folds into the UVR domain.

It belongs to the UvrB family. As to quaternary structure, forms a heterotetramer with UvrA during the search for lesions. Interacts with UvrC in an incision complex.

The protein localises to the cytoplasm. Its function is as follows. The UvrABC repair system catalyzes the recognition and processing of DNA lesions. A damage recognition complex composed of 2 UvrA and 2 UvrB subunits scans DNA for abnormalities. Upon binding of the UvrA(2)B(2) complex to a putative damaged site, the DNA wraps around one UvrB monomer. DNA wrap is dependent on ATP binding by UvrB and probably causes local melting of the DNA helix, facilitating insertion of UvrB beta-hairpin between the DNA strands. Then UvrB probes one DNA strand for the presence of a lesion. If a lesion is found the UvrA subunits dissociate and the UvrB-DNA preincision complex is formed. This complex is subsequently bound by UvrC and the second UvrB is released. If no lesion is found, the DNA wraps around the other UvrB subunit that will check the other stand for damage. This chain is UvrABC system protein B, found in Helicobacter pylori (strain ATCC 700392 / 26695) (Campylobacter pylori).